The chain runs to 1393 residues: DNA-directed RNA polymerase subunit beta' (1393 aa).

Zn(2+)-binding residues include Cys-72, Cys-74, Cys-87, and Cys-90. The Mg(2+) site is built by Asp-463, Asp-465, and Asp-467. Cys-812, Cys-887, Cys-894, and Cys-897 together coordinate Zn(2+).

Belongs to the RNA polymerase beta' chain family. As to quaternary structure, the RNAP catalytic core consists of 2 alpha, 1 beta, 1 beta' and 1 omega subunit. When a sigma factor is associated with the core the holoenzyme is formed, which can initiate transcription. The cofactor is Mg(2+). Zn(2+) is required as a cofactor.

The enzyme catalyses RNA(n) + a ribonucleoside 5'-triphosphate = RNA(n+1) + diphosphate. Its function is as follows. DNA-dependent RNA polymerase catalyzes the transcription of DNA into RNA using the four ribonucleoside triphosphates as substrates. The polypeptide is DNA-directed RNA polymerase subunit beta' (Chlamydia felis (strain Fe/C-56) (Chlamydophila felis)).